We begin with the raw amino-acid sequence, 130 residues long: Cytochrome c-type biogenesis protein CcmE (130 aa).

Over 1–7 (MKKKHKR) the chain is Cytoplasmic. A helical; Signal-anchor for type II membrane protein transmembrane segment spans residues 8–28 (LLITSGIFCFLSCAVFFILTT). The Extracellular portion of the chain corresponds to 29–130 (LKENISFFYT…DENYMPKVLK (102 aa)). Positions 120 and 124 each coordinate heme.

Belongs to the CcmE/CycJ family.

It localises to the cell membrane. Heme chaperone required for the biogenesis of c-type cytochromes. Transiently binds heme delivered by CcmC and transfers the heme to apo-cytochromes in a process facilitated by CcmF and CcmH. The sequence is that of Cytochrome c-type biogenesis protein CcmE from Wolbachia pipientis wMel.